A 62-amino-acid chain; its full sequence is Large ribosomal subunit protein bL28 (62 aa).

It belongs to the bacterial ribosomal protein bL28 family.

The protein is Large ribosomal subunit protein bL28 of Helicobacter pylori (strain P12).